An 864-amino-acid polypeptide reads, in one-letter code: DNA mismatch repair protein MutS (864 aa).

Position 607–614 (607–614 (GPNMGGKS)) interacts with ATP.

The protein belongs to the DNA mismatch repair MutS family.

This protein is involved in the repair of mismatches in DNA. It is possible that it carries out the mismatch recognition step. This protein has a weak ATPase activity. The chain is DNA mismatch repair protein MutS from Neisseria meningitidis serogroup B (strain ATCC BAA-335 / MC58).